We begin with the raw amino-acid sequence, 96 residues long: ESAT-6-like protein SAG0230 (96 aa).

It belongs to the WXG100 family. sagEsxA-like subfamily. Homodimer.

The protein is ESAT-6-like protein SAG0230 of Streptococcus agalactiae serotype V (strain ATCC BAA-611 / 2603 V/R).